Here is a 184-residue protein sequence, read N- to C-terminus: ADP-ribosylation factor-like protein 2 (184 aa).

A lipid anchor (N-myristoyl glycine) is attached at G2. GTP contacts are provided by residues 23 to 30 (GLDNAGKT), 66 to 70 (DVGGQ), G68, and 125 to 128 (NKSD).

This sequence belongs to the small GTPase superfamily. Arf family. In the embryo, strongly expressed in migrating hypodermal cells. Shortly before the beginning of elongation, expressed in many developing neurons where it persists throughout adulthood. In the larva, highly expressed in migrating hypodermal cells and the uterus. Also expressed in vulva, spermatheca, sheath cells, distal tips cells and proctoderm of the male tail.

The protein localises to the cytoplasm. It is found in the cell membrane. The protein resides in the cytoskeleton. Its subcellular location is the microtubule organizing center. It localises to the centrosome. In terms of biological role, GTP-binding protein that functions in embryogenesis, cytokinesis, germline development and microtubulule cytoskeleton dynamics. This is ADP-ribosylation factor-like protein 2 (evl-20) from Caenorhabditis elegans.